Here is a 127-residue protein sequence, read N- to C-terminus: Protein translocase subunit SecE (127 aa).

The Cytoplasmic portion of the chain corresponds to 1–19; the sequence is MSANTEAQGSGRGLEAMKW. The helical transmembrane segment at 20–32 threads the bilayer; sequence VVVVALLLVAIVG. The Periplasmic portion of the chain corresponds to 33 to 48; that stretch reads NYLYRDIMLPLRALAV. Residues 49-60 traverse the membrane as a helical segment; it reads VILIAAAGGVAL. The Cytoplasmic segment spans residues 61 to 97; sequence LTTKGKATVAFAREARTEVRKVIWPTRQETLHTTLIV. Residues 98 to 115 form a helical membrane-spanning segment; sequence AAVTAVMSLILWGLDGIL. The Periplasmic portion of the chain corresponds to 116–127; the sequence is VRLVSFITGLRF.

Belongs to the SecE/SEC61-gamma family. As to quaternary structure, component of the Sec protein translocase complex. Heterotrimer consisting of SecY, SecE and SecG subunits. The heterotrimers can form oligomers, although 1 heterotrimer is thought to be able to translocate proteins. Interacts with the ribosome. Interacts with SecDF, and other proteins may be involved. Interacts with SecA.

It is found in the cell inner membrane. Essential subunit of the Sec protein translocation channel SecYEG. Clamps together the 2 halves of SecY. May contact the channel plug during translocation. In Escherichia coli O157:H7, this protein is Protein translocase subunit SecE.